A 602-amino-acid polypeptide reads, in one-letter code: Non structural protein VP9' (602 aa).

The protein localises to the host cytoplasm. The polypeptide is Non structural protein VP9' (Callospermophilus lateralis (Golden-mantled ground squirrel)).